The sequence spans 88 residues: Arminin 1c (88 aa).

The first 18 residues, 1-18 (MKPVFVILFLTCIAFTYA), serve as a signal peptide directing secretion. Residues 19 to 57 (ESYEDVKEEIKNEVEREIFEDLEEESDVLDSNVREFNDA) constitute a propeptide that is removed on maturation. Residue V85 is modified to Valine amide.

Belongs to the arminin family. In terms of tissue distribution, expressed in entodermal epithelium along the body column.

The protein resides in the secreted. It localises to the target cell membrane. Its function is as follows. Antimicrobial peptide with a broad-spectrum antimicrobial activity. Keeps its antibacterial activity under a wide range of salt concentrations that mimic physiological conditions of human blood, which is surprising, since Hydra is an obligate freshwater animal with nearly no salt tolerance. Does not affect red blood cells. The protein is Arminin 1c of Hydra vulgaris (Hydra).